The chain runs to 109 residues: MMRGGMGNMNNMMKQMQKMQKEMAKAQEELGEKTVEGTAGGGMITVIANGHKQILEVKVKEEVVDPEDIEMLQDLVLAATNDALKKADELSNSTMGKFTKGLNLPGGMF.

It belongs to the YbaB/EbfC family. In terms of assembly, homodimer.

It is found in the cytoplasm. Its subcellular location is the nucleoid. In terms of biological role, binds to DNA and alters its conformation. May be involved in regulation of gene expression, nucleoid organization and DNA protection. The chain is Nucleoid-associated protein BCE_0021 from Bacillus cereus (strain ATCC 10987 / NRS 248).